The sequence spans 116 residues: uncharacterized protein (116 aa).

The next 3 membrane-spanning stretches (helical) occupy residues 8 to 28, 39 to 59, and 75 to 95; these read FMIY…VSFA, GLLL…NPPF, and FLLI…YLMV.

It to M.jannaschii MJ1580.

The protein localises to the cell membrane. This is an uncharacterized protein from Methanothermobacter thermautotrophicus (strain ATCC 29096 / DSM 1053 / JCM 10044 / NBRC 100330 / Delta H) (Methanobacterium thermoautotrophicum).